A 533-amino-acid chain; its full sequence is MLLSGMRESQGTEVSLRTISTQDLRLLVSFAYSGVVRARWPGLLRAAQAALQYQSSSCLDLCQKGLARGLSPARCLALFPMAEAPGLERLWSKARHYLLTHLPAVALCPAFPSLPAACLAELLDSDELHVQEEFEAFVAARCWLAANPETQESEAKALLRCVRFGRMSTRELRRVRAAGLLPPLTPDLLHQLMVEADVPGQERRREPDRALVVIGGDGLRPDMALRQPSRAVWWARAFRCGVGLVRTVEWGQLPALPAPGRFRHGAASLAGSELYVCGGQDFYSHSNTLASTLRWEPSQEDWEEMAPLSQARSLFSLVALDGKLYALGGRHNDVALDSVETYNPELNVWRPAPALPAPCFAHAAAILEGQLYVSGGCGGTGQYLASLMHYDPKLEKPGTFLSPMGVPRAGHVMAALGGRLYVAGGLGETEDLLSFEAYELRTDSWTHLAPLPSPHVGAASAVLQGELLVLGGYSHRTYALSHLIHAYCPGLGRWLCLGTLPRPRAEMPACILTLPAVQHIALVPTPHQTKPAG.

Kelch repeat units follow at residues 210–258 (ALVV…ALPA), 273–322 (ELYV…ALDG), 323–369 (KLYA…ILEG), 371–418 (LYVS…ALGG), 419–465 (RLYV…VLQG), and 467–514 (LLVL…ILTL).

This Homo sapiens (Human) protein is Kelch-like protein 33 (KLHL33).